A 428-amino-acid polypeptide reads, in one-letter code: Phosphomethylpyrimidine synthase (428 aa).

Substrate-binding positions include asparagine 66, methionine 95, tyrosine 124, histidine 163, 185–187, 226–229, and glutamate 265; these read SRG and DGLR. A Zn(2+)-binding site is contributed by histidine 269. Tyrosine 292 is a substrate binding site. Position 333 (histidine 333) interacts with Zn(2+). 3 residues coordinate [4Fe-4S] cluster: cysteine 407, cysteine 410, and cysteine 414.

It belongs to the ThiC family. The cofactor is [4Fe-4S] cluster.

It catalyses the reaction 5-amino-1-(5-phospho-beta-D-ribosyl)imidazole + S-adenosyl-L-methionine = 4-amino-2-methyl-5-(phosphooxymethyl)pyrimidine + CO + 5'-deoxyadenosine + formate + L-methionine + 3 H(+). The protein operates within cofactor biosynthesis; thiamine diphosphate biosynthesis. Catalyzes the synthesis of the hydroxymethylpyrimidine phosphate (HMP-P) moiety of thiamine from aminoimidazole ribotide (AIR) in a radical S-adenosyl-L-methionine (SAM)-dependent reaction. This Thermococcus kodakarensis (strain ATCC BAA-918 / JCM 12380 / KOD1) (Pyrococcus kodakaraensis (strain KOD1)) protein is Phosphomethylpyrimidine synthase.